A 296-amino-acid chain; its full sequence is Protease HtpX homolog (296 aa).

Transmembrane regions (helical) follow at residues 14–34 (VVLL…VGYL) and 39–59 (YQFG…SMIF). His-143 contributes to the Zn(2+) binding site. Glu-144 is a catalytic residue. His-147 provides a ligand contact to Zn(2+). The next 2 membrane-spanning stretches (helical) occupy residues 158–178 (IAVA…RMLF) and 195–215 (ILVL…ASLV). Glu-224 serves as a coordination point for Zn(2+).

It belongs to the peptidase M48B family. Zn(2+) serves as cofactor.

It is found in the cell membrane. This Streptococcus agalactiae serotype III (strain NEM316) protein is Protease HtpX homolog.